Consider the following 337-residue polypeptide: Alanine racemase (337 aa).

Lys33 serves as the catalytic Proton acceptor; specific for D-alanine. N6-(pyridoxal phosphate)lysine is present on Lys33. Arg118 lines the substrate pocket. Tyr246 (proton acceptor; specific for L-alanine) is an active-site residue. Substrate is bound at residue Met292.

Belongs to the alanine racemase family. Pyridoxal 5'-phosphate is required as a cofactor.

It catalyses the reaction L-alanine = D-alanine. It functions in the pathway amino-acid biosynthesis; D-alanine biosynthesis; D-alanine from L-alanine: step 1/1. In terms of biological role, catalyzes the interconversion of L-alanine and D-alanine. May also act on other amino acids. This chain is Alanine racemase (alr), found in Campylobacter curvus (strain 525.92).